We begin with the raw amino-acid sequence, 141 residues long: Large ribosomal subunit protein uL11 (141 aa).

This sequence belongs to the universal ribosomal protein uL11 family. As to quaternary structure, part of the ribosomal stalk of the 50S ribosomal subunit. Interacts with L10 and the large rRNA to form the base of the stalk. L10 forms an elongated spine to which L12 dimers bind in a sequential fashion forming a multimeric L10(L12)X complex. Post-translationally, one or more lysine residues are methylated.

In terms of biological role, forms part of the ribosomal stalk which helps the ribosome interact with GTP-bound translation factors. The protein is Large ribosomal subunit protein uL11 of Ligilactobacillus salivarius (strain UCC118) (Lactobacillus salivarius).